Consider the following 353-residue polypeptide: Photosystem II protein D1 (353 aa).

N-acetylthreonine is present on Thr-2. At Thr-2 the chain carries Phosphothreonine. 3 helical membrane passes run 29 to 46 (YIGW…TATS), 118 to 133 (HFLL…EWEL), and 142 to 156 (WIAV…AAAA). Residue His-118 coordinates chlorophyll a. Pheophytin a is bound at residue Tyr-126. Positions 170 and 189 each coordinate [CaMn4O5] cluster. The helical transmembrane segment at 197 to 218 (FHMLGVAGVFGGSLFSAMHGSL) threads the bilayer. Position 198 (His-198) interacts with chlorophyll a. A quinone-binding positions include His-215 and 264–265 (SF). His-215 is a Fe cation binding site. Position 272 (His-272) interacts with Fe cation. Residues 274–288 (FLAAWPVVGIWFTAL) form a helical membrane-spanning segment. The [CaMn4O5] cluster site is built by His-332, Glu-333, Asp-342, and Ala-344. Positions 345 to 353 (SVEAPSVKA) are excised as a propeptide.

Belongs to the reaction center PufL/M/PsbA/D family. PSII is composed of 1 copy each of membrane proteins PsbA, PsbB, PsbC, PsbD, PsbE, PsbF, PsbH, PsbI, PsbJ, PsbK, PsbL, PsbM, PsbT, PsbX, PsbY, PsbZ, Psb30/Ycf12, at least 3 peripheral proteins of the oxygen-evolving complex and a large number of cofactors. It forms dimeric complexes. The D1/D2 heterodimer binds P680, chlorophylls that are the primary electron donor of PSII, and subsequent electron acceptors. It shares a non-heme iron and each subunit binds pheophytin, quinone, additional chlorophylls, carotenoids and lipids. D1 provides most of the ligands for the Mn4-Ca-O5 cluster of the oxygen-evolving complex (OEC). There is also a Cl(-1) ion associated with D1 and D2, which is required for oxygen evolution. The PSII complex binds additional chlorophylls, carotenoids and specific lipids. is required as a cofactor. Post-translationally, tyr-161 forms a radical intermediate that is referred to as redox-active TyrZ, YZ or Y-Z. In terms of processing, C-terminally processed by CTPA; processing is essential to allow assembly of the oxygen-evolving complex and thus photosynthetic growth.

It is found in the plastid. It localises to the chloroplast thylakoid membrane. It carries out the reaction 2 a plastoquinone + 4 hnu + 2 H2O = 2 a plastoquinol + O2. Photosystem II (PSII) is a light-driven water:plastoquinone oxidoreductase that uses light energy to abstract electrons from H(2)O, generating O(2) and a proton gradient subsequently used for ATP formation. It consists of a core antenna complex that captures photons, and an electron transfer chain that converts photonic excitation into a charge separation. The D1/D2 (PsbA/PsbD) reaction center heterodimer binds P680, the primary electron donor of PSII as well as several subsequent electron acceptors. The protein is Photosystem II protein D1 of Angiopteris evecta (Mule's foot fern).